Consider the following 205-residue polypeptide: Inactive ribonuclease-like protein 9 (205 aa).

Positions 1-26 (MMRTLITTHPLPLLLLPQQLLQPVQF) are cleaved as a signal peptide. 3 disulfide bridges follow: Cys-98-Cys-153, Cys-116-Cys-168, and Cys-123-Cys-130. 2 N-linked (GlcNAc...) asparagine glycosylation sites follow: Asn-131 and Asn-143.

This sequence belongs to the pancreatic ribonuclease family.

Its subcellular location is the secreted. Does not exhibit any ribonuclease activity. This Pan troglodytes (Chimpanzee) protein is Inactive ribonuclease-like protein 9 (RNASE9).